A 98-amino-acid chain; its full sequence is NADH-ubiquinone oxidoreductase chain 4L (98 aa).

3 helical membrane-spanning segments follow: residues 1–21 (MAPI…GVLI), 28–48 (STLL…TLLI), and 59–79 (APLI…ALLV).

It belongs to the complex I subunit 4L family. Core subunit of respiratory chain NADH dehydrogenase (Complex I) which is composed of 45 different subunits.

It localises to the mitochondrion inner membrane. The enzyme catalyses a ubiquinone + NADH + 5 H(+)(in) = a ubiquinol + NAD(+) + 4 H(+)(out). Core subunit of the mitochondrial membrane respiratory chain NADH dehydrogenase (Complex I) which catalyzes electron transfer from NADH through the respiratory chain, using ubiquinone as an electron acceptor. Part of the enzyme membrane arm which is embedded in the lipid bilayer and involved in proton translocation. This Isoodon macrourus (Short-nosed bandicoot) protein is NADH-ubiquinone oxidoreductase chain 4L (MT-ND4L).